A 633-amino-acid polypeptide reads, in one-letter code: Kelch repeat and BTB domain-containing protein 11 (633 aa).

The tract at residues M1–A118 is disordered. A compositionally biased stretch (polar residues) spans S35–R60. Residues A61–S73 are compositionally biased toward low complexity. Phosphoserine occurs at positions 70, 73, 92, 95, 107, and 113. Residues P146–R206 form the BTB domain. Kelch repeat units lie at residues R317–N365, Y366–G418, H419–G463, and I465–G506.

This is Kelch repeat and BTB domain-containing protein 11 (Kbtbd11) from Mus musculus (Mouse).